A 351-amino-acid polypeptide reads, in one-letter code: Protein TBATA (351 aa).

4 disordered regions span residues K16 to E40, K167 to A186, S195 to H216, and E292 to S351. Over residues K167 to G181 the composition is skewed to basic and acidic residues. Composition is skewed to basic and acidic residues over residues E292 to E302 and T340 to S351.

It belongs to the TBATA family.

It localises to the cytoplasm. Its subcellular location is the cytosol. In terms of biological role, may play a role in spermatid differentiation. Modulates thymic stromal cell proliferation and thymus function. The chain is Protein TBATA (TBATA) from Homo sapiens (Human).